The following is a 417-amino-acid chain: Putative competence-damage inducible protein (417 aa).

It belongs to the CinA family.

The sequence is that of Putative competence-damage inducible protein from Oceanobacillus iheyensis (strain DSM 14371 / CIP 107618 / JCM 11309 / KCTC 3954 / HTE831).